Here is a 362-residue protein sequence, read N- to C-terminus: MINNPKVDSVAEKPKAVTSKQSEQAASPEPTPAPPVSRNQYPITFNLTSTAPFHLHDRHRYLQEQDLYKCASRDSLSSLQQLAHTPNGSTRKKYIVEDQSPYSSENPVIVTSSYNHTVCTNYLRPRMQFTGYQISGYKRYQVTVNLKTVDLPKKDCTSLSPHLSGFLSIRGLTNQHPEISTYFEAYAVNHKELGFLSSSWKDEPVLNEFKATDQTDLEHWINFPSFRQLFLMSQKNGLNSTDDNGTTNAAKKLPPQQLPTTPSADAGNISRIFSQEKQFDNYLNERFIFMKWKEKFLVPDALLMEGVDGASYDGFYYIVHDQVTGNIQGFYYHQDAEKFQQLELVPSLKNKVESSDCSFEFA.

2 disordered regions span residues 1–40 and 240–267; these read MINN…SRNQ and STDD…ADAG. Lys-20 is covalently cross-linked (Glycyl lysine isopeptide (Lys-Gly) (interchain with G-Cter in ubiquitin)). Ser-27 carries the post-translational modification Phosphoserine. The span at 240 to 249 shows a compositional bias: polar residues; it reads STDDNGTTNA.

Belongs to the GID4/VID24 family. Substrate-recognition component of the GID/CTLH ubiquitin ligase complex. In the absence of stress, the complex exists as an inactive anticipatory complex (GID(Ant)), composed of VID30/GID1, the E3 ubiquitin-ligase RMD5/GID2, VID28/GID5, GID8, and the RING-like subunit FYV10/GID9, awaiting a substrate receptor to form the active E3 ligase complex. When cells are shifted to glucose-containing medium, the substrate receptor VID24/GID4 is induced and becomes part of the complex, named GID(SR4). Additionally, GID7 transforms the GID(SR4) E3 ligase core into a higher-order supramolecular assembly (Chelator-GID(SR4)) specifically tailored for FBP1 ubiquitination. Under osmotic or heat stress, the substrate receptor GID10 is induced and becomes part of the complex, named GID(SR10). Within the complex, VVID24/GID4 is recruited to the complex via interaction with VID28/GID5. Interacts with proteins that have an N-terminal Pro/N-degron, including FBP1, ICL1 and MDH2. Post-translationally, ubiquitinated by the GID complex, leading to subsequent proteasomal degradation.

It localises to the cytoplasmic vesicle membrane. In terms of biological role, substrate-recognition component of the GID E3 ligase complex recruiting N termini and catalyzing ubiquitination of proteins targeted for degradation. GID E3 is regulated through assembly with interchangeable N-degron-binding substrate receptors induced by distinct environmental perturbations. Required for the adaptation to the presence of glucose in the growth medium; mediates the degradation of enzymes involved in gluconeogenesis when cells are shifted to glucose-containing medium. Required for proteasome-dependent catabolite degradation of fructose-1,6-bisphosphatase (FBP1), malate dehydrogenase (MDH2), and other gluconeogenic enzymes, probably by targeting FBP1-containing vesicles to the vacuole, but is not required for FBP1 sequestration in cytoplasmic vesicles. Specific for substrates with an N-terminal Pro (Pro/N-degron), including FBP1, ICL1 and MDH2. Has high affinity for the N-terminal sequence Pro-Thr-Leu-Val, and can bind peptides with an N-terminal sequence of the type Pro-[Gly,Ala,Ser,Thr,Asp,Asn,Tyr,His]-[Ala,Val,Leu,Ile,Lys,Arg]-[Val,Cys,Pro,Leu,Ile,Trp]. Also recognizes nonproline N-terminal residues and targets an Ile-Gly-Lys-Trp-bearing protein for rapid degradation. The polypeptide is GID complex substrate-recognition subunit 4 (Saccharomyces cerevisiae (strain ATCC 204508 / S288c) (Baker's yeast)).